We begin with the raw amino-acid sequence, 477 residues long: Ribulose bisphosphate carboxylase large chain (477 aa).

A propeptide spanning residues 1–2 (MS) is cleaved from the precursor. Pro3 is modified (N-acetylproline). The residue at position 14 (Lys14) is an N6,N6,N6-trimethyllysine. Residues Asn123 and Thr173 each coordinate substrate. Lys175 (proton acceptor) is an active-site residue. Substrate is bound at residue Lys177. Mg(2+) contacts are provided by Lys201, Asp203, and Glu204. Lys201 bears the N6-carboxylysine mark. The active-site Proton acceptor is the His294. The substrate site is built by Arg295, His327, and Ser379.

This sequence belongs to the RuBisCO large chain family. Type I subfamily. Heterohexadecamer of 8 large chains and 8 small chains; disulfide-linked. The disulfide link is formed within the large subunit homodimers. The cofactor is Mg(2+). The disulfide bond which can form in the large chain dimeric partners within the hexadecamer appears to be associated with oxidative stress and protein turnover.

Its subcellular location is the plastid. It localises to the chloroplast. The enzyme catalyses 2 (2R)-3-phosphoglycerate + 2 H(+) = D-ribulose 1,5-bisphosphate + CO2 + H2O. The catalysed reaction is D-ribulose 1,5-bisphosphate + O2 = 2-phosphoglycolate + (2R)-3-phosphoglycerate + 2 H(+). In terms of biological role, ruBisCO catalyzes two reactions: the carboxylation of D-ribulose 1,5-bisphosphate, the primary event in carbon dioxide fixation, as well as the oxidative fragmentation of the pentose substrate in the photorespiration process. Both reactions occur simultaneously and in competition at the same active site. The chain is Ribulose bisphosphate carboxylase large chain from Nicotiana acuminata (Acuminate tobacco).